Reading from the N-terminus, the 150-residue chain is UPF0178 protein Ssed_1350 (150 aa).

It belongs to the UPF0178 family.

In Shewanella sediminis (strain HAW-EB3), this protein is UPF0178 protein Ssed_1350.